Here is a 611-residue protein sequence, read N- to C-terminus: Leukotriene A-4 hydrolase (611 aa).

K73 bears the N6-acetyllysine mark. Residues 135-137 (QCQ) and 267-272 (PYGGME) each bind a peptide. H296 contributes to the Zn(2+) binding site. Residue E297 is the Proton acceptor of the active site. Residues H300 and E319 each coordinate Zn(2+). The residue at position 337 (K337) is an N6-acetyllysine. The active-site Proton donor is Y384. K414 carries the post-translational modification N6-acetyllysine. S416 is modified (phosphoserine). 564–566 (RMK) contributes to the a peptide binding site. K573 is modified (N6-acetyllysine).

The protein belongs to the peptidase M1 family. In terms of assembly, monomer. Zn(2+) serves as cofactor. Post-translationally, phosphorylation at Ser-416 inhibits leukotriene-A4 hydrolase activity. In terms of tissue distribution, isoform 1 and isoform 2 are expressed in monocytes, lymphocytes, neutrophils, reticulocytes, platelets and fibroblasts.

It localises to the cytoplasm. The catalysed reaction is leukotriene A4 + H2O = leukotriene B4. It catalyses the reaction (5S,6S)-epoxy-(18R)-hydroxy-(7E,9E,11Z,14Z,16E)-eicosapentaenoate + H2O = resolvin E1. It carries out the reaction (5S,6S)-epoxy-(18S)-hydroxy-(7E,9E,11Z,14Z,16E)-eicosapentaenoate + H2O = 18S-resolvin E1. The enzyme catalyses Release of the N-terminal residue from a tripeptide.. The protein operates within lipid metabolism; leukotriene B4 biosynthesis. Its activity is regulated as follows. Inhibited by bestatin. The epoxide hydrolase activity is restrained by suicide inactivation that involves binding of LTA4 to Tyr-379. 4-(4-benzylphenyl)thiazol-2-amine (ARM1) selectively inhibits the epoxide hydrolase activity. Functionally, bifunctional zinc metalloenzyme that comprises both epoxide hydrolase (EH) and aminopeptidase activities. Acts as an epoxide hydrolase to catalyze the conversion of LTA4 to the pro-inflammatory mediator leukotriene B4 (LTB4). Also has aminopeptidase activity, with high affinity for N-terminal arginines of various synthetic tripeptides. In addition to its pro-inflammatory EH activity, may also counteract inflammation by its aminopeptidase activity, which inactivates by cleavage another neutrophil attractant, the tripeptide Pro-Gly-Pro (PGP), a bioactive fragment of collagen generated by the action of matrix metalloproteinase-9 (MMP9) and prolylendopeptidase (PREPL). Involved also in the biosynthesis of resolvin E1 and 18S-resolvin E1 from eicosapentaenoic acid, two lipid mediators that show potent anti-inflammatory and pro-resolving actions. This is Leukotriene A-4 hydrolase (LTA4H) from Homo sapiens (Human).